The sequence spans 476 residues: Siroheme synthase (476 aa).

Positions 1–207 are precorrin-2 dehydrogenase /sirohydrochlorin ferrochelatase; it reads MTANALFPLF…QRHAEAEAVL (207 aa). NAD(+)-binding positions include 25–26 and 46–47; these read KV and PS. Ser-132 is subject to Phosphoserine. The interval 220-476 is uroporphyrinogen-III C-methyltransferase; it reads GSVTLVGAGA…SAPCPPARIL (257 aa). The Proton acceptor role is filled by Asp-252. The Proton donor role is filled by Lys-274. Residues 305-307, Val-310, 335-336, Met-387, and Gly-416 contribute to the S-adenosyl-L-methionine site; these read GGD and TA.

The protein in the N-terminal section; belongs to the precorrin-2 dehydrogenase / sirohydrochlorin ferrochelatase family. It in the C-terminal section; belongs to the precorrin methyltransferase family.

It catalyses the reaction uroporphyrinogen III + 2 S-adenosyl-L-methionine = precorrin-2 + 2 S-adenosyl-L-homocysteine + H(+). The enzyme catalyses precorrin-2 + NAD(+) = sirohydrochlorin + NADH + 2 H(+). The catalysed reaction is siroheme + 2 H(+) = sirohydrochlorin + Fe(2+). It functions in the pathway cofactor biosynthesis; adenosylcobalamin biosynthesis; precorrin-2 from uroporphyrinogen III: step 1/1. Its pathway is cofactor biosynthesis; adenosylcobalamin biosynthesis; sirohydrochlorin from precorrin-2: step 1/1. It participates in porphyrin-containing compound metabolism; siroheme biosynthesis; precorrin-2 from uroporphyrinogen III: step 1/1. The protein operates within porphyrin-containing compound metabolism; siroheme biosynthesis; siroheme from sirohydrochlorin: step 1/1. It functions in the pathway porphyrin-containing compound metabolism; siroheme biosynthesis; sirohydrochlorin from precorrin-2: step 1/1. In terms of biological role, multifunctional enzyme that catalyzes the SAM-dependent methylations of uroporphyrinogen III at position C-2 and C-7 to form precorrin-2 via precorrin-1. Then it catalyzes the NAD-dependent ring dehydrogenation of precorrin-2 to yield sirohydrochlorin. Finally, it catalyzes the ferrochelation of sirohydrochlorin to yield siroheme. This chain is Siroheme synthase, found in Xylella fastidiosa (strain M12).